The chain runs to 200 residues: Glycerol-3-phosphate acyltransferase (200 aa).

The next 5 membrane-spanning stretches (helical) occupy residues 2–22 (FNIS…AVIV), 51–71 (KAAA…VLLA), 84–104 (AIAA…FFGF), 114–134 (LGVL…IWLV), and 159–179 (FFMP…LVLF).

This sequence belongs to the PlsY family. In terms of assembly, probably interacts with PlsX.

It is found in the cell inner membrane. The catalysed reaction is an acyl phosphate + sn-glycerol 3-phosphate = a 1-acyl-sn-glycero-3-phosphate + phosphate. The protein operates within lipid metabolism; phospholipid metabolism. Its function is as follows. Catalyzes the transfer of an acyl group from acyl-phosphate (acyl-PO(4)) to glycerol-3-phosphate (G3P) to form lysophosphatidic acid (LPA). This enzyme utilizes acyl-phosphate as fatty acyl donor, but not acyl-CoA or acyl-ACP. This chain is Glycerol-3-phosphate acyltransferase, found in Neisseria meningitidis serogroup C (strain 053442).